Consider the following 280-residue polypeptide: MLERAQRTLKRKVHYSGVGIHFGKSATLTLEPAEENTGIVFYRSDLLGDRIPALLPHVCNTGRSTTLSSGDSVIATVEHLMAALRSSNIDNVIVRCGEEEIPIGDGSSHVFMQLIDEAGICTQNDTVPIAKLARPVYYQTQDTFLAAFPCDELKISYTLHYPQSPTIGTQYRSFVITEESFRKEIAPCRTFALYNELCFLMDRGLIRGGCLENAVVFKDDGIISLGQLRFPDEPVRHKILDLIGDLSLVGRPFVAHIVAVGSGHSSNIALGRKILEELQP.

Zn(2+) is bound by residues His-79, His-237, and Asp-241. His-264 serves as the catalytic Proton donor.

Belongs to the LpxC family. Requires Zn(2+) as cofactor.

The enzyme catalyses a UDP-3-O-[(3R)-3-hydroxyacyl]-N-acetyl-alpha-D-glucosamine + H2O = a UDP-3-O-[(3R)-3-hydroxyacyl]-alpha-D-glucosamine + acetate. Its pathway is glycolipid biosynthesis; lipid IV(A) biosynthesis; lipid IV(A) from (3R)-3-hydroxytetradecanoyl-[acyl-carrier-protein] and UDP-N-acetyl-alpha-D-glucosamine: step 2/6. In terms of biological role, catalyzes the hydrolysis of UDP-3-O-myristoyl-N-acetylglucosamine to form UDP-3-O-myristoylglucosamine and acetate, the committed step in lipid A biosynthesis. This chain is UDP-3-O-acyl-N-acetylglucosamine deacetylase, found in Chlamydia felis (strain Fe/C-56) (Chlamydophila felis).